A 402-amino-acid chain; its full sequence is Triose phosphate/phosphate translocator, non-green plastid, chloroplastic (402 aa).

Residues 1–82 (MQSSAVFSAS…SLDTNRFKTA (82 aa)) constitute a chloroplast transit peptide. Topologically, residues 83–98 (ATAVPEEGEGSGKMTK) are chloroplast intermembrane. A helical membrane pass occupies residues 99-119 (VLELGLLFAMWYLFNIYFNIY). The 119-residue stretch at 118–236 (IYNKQVLKAL…IVGGVALASV (119 aa)) folds into the EamA domain. Residues 120-131 (NKQVLKALHAPM) lie on the Lumenal side of the membrane. Residues 132–152 (TVTLVQFAVGSVLITFMWALN) traverse the membrane as a helical segment. The Chloroplast intermembrane segment spans residues 153–209 (LYKRPKISAAQLAAILPLAVVHTLGNLFTNMSLGKVSVSFTHTIKAMEPFFSVVLSA). A helical transmembrane segment spans residues 210–230 (MFLGEVPTPWVIGSIIPIVGG). Over 231-278 (VALASVTEVSFNWAGFLSAMASNLTNQSRNVLSKKVMVKKDDSLDNIT) the chain is Lumenal. The chain crosses the membrane as a helical span at residues 279 to 298 (LFSIITLMSLFLMAPVTFFS). At 299 to 374 (EGIKFTPSYI…IFFKTPVSPV (76 aa)) the chain is on the chloroplast intermembrane side. A helical membrane pass occupies residues 375 to 394 (NAFGTGIALAGVFLYSRVKR). Over 395–402 (IKPKPKTA) the chain is Lumenal.

It belongs to the TPT transporter family. TPT (TC 2.A.7.9) subfamily. In terms of assembly, homodimer.

Its subcellular location is the plastid. The protein resides in the chloroplast membrane. Its function is as follows. Mediates the export of fixed carbons from the chloroplasts into the cytosol in the form of triose phosphates. The protein is Triose phosphate/phosphate translocator, non-green plastid, chloroplastic (NGTPT) of Brassica oleracea var. botrytis (Cauliflower).